The sequence spans 368 residues: Anti-sigma-X factor RsiX (368 aa).

The segment covering 73 to 87 has biased composition (polar residues); sequence QPQQKEASQENAVTK. The interval 73–101 is disordered; the sequence is QPQQKEASQENAVTKTETEDSPKAASSLD.

It localises to the cell membrane. In terms of biological role, the anti-sigma factor for extracytoplasmic function (ECF) sigma factor SigX, inhibits SigX activity and stabilizes it. In Bacillus subtilis (strain 168), this protein is Anti-sigma-X factor RsiX (rsiX).